Reading from the N-terminus, the 356-residue chain is tRNA-specific 2-thiouridylase MnmA (356 aa).

Residues Ala-6–Ser-13 and Leu-32 contribute to the ATP site. Cys-101 (nucleophile) is an active-site residue. Cys-101 and Cys-193 are joined by a disulfide. Gly-125 serves as a coordination point for ATP. The segment at Lys-143–Gln-145 is interaction with tRNA. The active-site Cysteine persulfide intermediate is Cys-193.

Belongs to the MnmA/TRMU family.

It is found in the cytoplasm. The catalysed reaction is S-sulfanyl-L-cysteinyl-[protein] + uridine(34) in tRNA + AH2 + ATP = 2-thiouridine(34) in tRNA + L-cysteinyl-[protein] + A + AMP + diphosphate + H(+). In terms of biological role, catalyzes the 2-thiolation of uridine at the wobble position (U34) of tRNA, leading to the formation of s(2)U34. This Mycobacteroides abscessus (strain ATCC 19977 / DSM 44196 / CCUG 20993 / CIP 104536 / JCM 13569 / NCTC 13031 / TMC 1543 / L948) (Mycobacterium abscessus) protein is tRNA-specific 2-thiouridylase MnmA.